The chain runs to 224 residues: tRNA (guanine-N(7)-)-methyltransferase (224 aa).

Residues Glu52, Asp77, and Asp126 each coordinate S-adenosyl-L-methionine. Asp126 is a catalytic residue. 2 residues coordinate substrate: Lys130 and Asp162.

The protein belongs to the class I-like SAM-binding methyltransferase superfamily. TrmB family.

The enzyme catalyses guanosine(46) in tRNA + S-adenosyl-L-methionine = N(7)-methylguanosine(46) in tRNA + S-adenosyl-L-homocysteine. Its pathway is tRNA modification; N(7)-methylguanine-tRNA biosynthesis. Its function is as follows. Catalyzes the formation of N(7)-methylguanine at position 46 (m7G46) in tRNA. The sequence is that of tRNA (guanine-N(7)-)-methyltransferase from Christiangramia forsetii (strain DSM 17595 / CGMCC 1.15422 / KT0803) (Gramella forsetii).